The chain runs to 270 residues: Probable thioesterase BOA10 (270 aa).

Belongs to the AMT4 thioesterase family.

It functions in the pathway polyketide biosynthesis. Functionally, probable thioesterase; part of the gene cluster B that mediates the biosynthesis of botcinic acid and its botcinin derivatives, acetate-derived polyketides that contribute to virulence when combined with the sesquiterpene botrydial. Botcinic acid and its derivatives have been shown to induce chlorosis and necrosis during host plant infection, but also have antifungal activities. Two polyketide synthases, BOA6 and BOA9, are involved in the biosynthesis of botcinins. BOA6 mediates the formation of the per-methylated tetraketide core by condensation of four units of malonyl-CoA with one unit of acetyl-CoA, which would be methylated in activated methylene groups to yield a bicyclic acid intermediate that could then either be converted to botrylactone derivatives or lose the starter acetate unit through a retro-Claisen type C-C bond cleavage to yield botcinin derivatives. The second polyketide synthase, BOA9, is probably required for the biosynthesis of the tetraketide side chain of botcinins. The methyltransferase (MT) domain within BOA6 is probably responsible for the incorporation of four methyl groups. The trans-enoyl reductase BOA5 might take over the enoyl reductase function of BOA6 that misses an ER domain. The monooxygenases BOA2, BOA3 and BOA4 might be involved in further hydroxylations at C4, C5 and C8, whereas BOA7, close to BOA9, could potentially be involved in the hydroxylation at C4 in the side chain of botcinins. The protein is Probable thioesterase BOA10 of Botryotinia fuckeliana (strain B05.10) (Noble rot fungus).